Consider the following 350-residue polypeptide: L-serine dehydratase (350 aa).

Lys-62 bears the N6-(pyridoxal phosphate)lysine mark.

This sequence belongs to the serine/threonine dehydratase family. Requires pyridoxal 5'-phosphate as cofactor.

The protein resides in the cytoplasm. The catalysed reaction is L-serine = pyruvate + NH4(+). It participates in carbohydrate biosynthesis; gluconeogenesis. This is L-serine dehydratase (sds) from Dictyostelium discoideum (Social amoeba).